The following is a 333-amino-acid chain: Uroporphyrinogen decarboxylase (333 aa).

Residues R22–R26, D71, Y145, S200, and H310 each bind substrate.

Belongs to the uroporphyrinogen decarboxylase family. Homodimer.

Its subcellular location is the cytoplasm. It catalyses the reaction uroporphyrinogen III + 4 H(+) = coproporphyrinogen III + 4 CO2. It participates in porphyrin-containing compound metabolism; protoporphyrin-IX biosynthesis; coproporphyrinogen-III from 5-aminolevulinate: step 4/4. Its function is as follows. Catalyzes the decarboxylation of four acetate groups of uroporphyrinogen-III to yield coproporphyrinogen-III. The sequence is that of Uroporphyrinogen decarboxylase from Thermoplasma acidophilum (strain ATCC 25905 / DSM 1728 / JCM 9062 / NBRC 15155 / AMRC-C165).